The following is a 392-amino-acid chain: uncharacterized protein (392 aa).

The protein belongs to the glycosyltransferase group 1 family. Glycosyltransferase 4 subfamily.

This is an uncharacterized protein from Methanocaldococcus jannaschii (strain ATCC 43067 / DSM 2661 / JAL-1 / JCM 10045 / NBRC 100440) (Methanococcus jannaschii).